A 177-amino-acid chain; its full sequence is Large ribosomal subunit protein uL6 (177 aa).

It belongs to the universal ribosomal protein uL6 family. As to quaternary structure, part of the 50S ribosomal subunit.

This protein binds to the 23S rRNA, and is important in its secondary structure. It is located near the subunit interface in the base of the L7/L12 stalk, and near the tRNA binding site of the peptidyltransferase center. This is Large ribosomal subunit protein uL6 from Bradyrhizobium diazoefficiens (strain JCM 10833 / BCRC 13528 / IAM 13628 / NBRC 14792 / USDA 110).